The following is a 130-amino-acid chain: RutC family protein slr0709 (130 aa).

This sequence belongs to the RutC family.

In Synechocystis sp. (strain ATCC 27184 / PCC 6803 / Kazusa), this protein is RutC family protein slr0709.